A 155-amino-acid polypeptide reads, in one-letter code: Ribosomal RNA large subunit methyltransferase H (155 aa).

S-adenosyl-L-methionine-binding positions include leucine 72, glycine 103, and 122-127 (LSTLTL).

The protein belongs to the RNA methyltransferase RlmH family. In terms of assembly, homodimer.

The protein localises to the cytoplasm. It catalyses the reaction pseudouridine(1915) in 23S rRNA + S-adenosyl-L-methionine = N(3)-methylpseudouridine(1915) in 23S rRNA + S-adenosyl-L-homocysteine + H(+). In terms of biological role, specifically methylates the pseudouridine at position 1915 (m3Psi1915) in 23S rRNA. This Klebsiella pneumoniae (strain 342) protein is Ribosomal RNA large subunit methyltransferase H.